Consider the following 318-residue polypeptide: Melanoma-associated antigen 8 (318 aa).

Positions 1 to 103 (MLLGQKSQRY…GPSTSPDPAH (103 aa)) are disordered. Residues 112-311 (LDEKVAELVR…ISYPSLHEEA (200 aa)) enclose the MAGE domain.

As to expression, expressed in many tumors of several types, such as melanoma, head and neck squamous cell carcinoma, lung carcinoma and breast carcinoma, but not in normal tissues except for testis and placenta.

In terms of biological role, not known, though may play a role in embryonal development and tumor transformation or aspects of tumor progression. This chain is Melanoma-associated antigen 8 (MAGEA8), found in Homo sapiens (Human).